Here is a 464-residue protein sequence, read N- to C-terminus: NADH dehydrogenase [ubiquinone] flavoprotein 1, mitochondrial (464 aa).

The transit peptide at M1 to F20 directs the protein to the mitochondrion. At K81 the chain carries N6-acetyllysine; alternate. K81 is modified (N6-succinyllysine; alternate). G87–G96 provides a ligand contact to NADH. Position 104 is an N6-acetyllysine (K104). Position 199-247 (R199–T247) interacts with FMN. R257 is subject to Omega-N-methylarginine. K375 is subject to N6-acetyllysine. Residues C379, C382, C385, and C425 each contribute to the [4Fe-4S] cluster site.

It belongs to the complex I 51 kDa subunit family. As to quaternary structure, core subunit of respiratory chain NADH dehydrogenase (Complex I) which is composed of 45 different subunits. This is a component of the flavoprotein-sulfur (FP) fragment of the enzyme. Interacts with RAB5IF. FMN serves as cofactor. The cofactor is [4Fe-4S] cluster.

The protein localises to the mitochondrion inner membrane. The catalysed reaction is a ubiquinone + NADH + 5 H(+)(in) = a ubiquinol + NAD(+) + 4 H(+)(out). In terms of biological role, core subunit of the mitochondrial membrane respiratory chain NADH dehydrogenase (Complex I) which catalyzes electron transfer from NADH through the respiratory chain, using ubiquinone as an electron acceptor. Part of the peripheral arm of the enzyme, where the electrons from NADH are accepted by flavin mononucleotide (FMN) and then passed along a chain of iron-sulfur clusters by electron tunnelling to the final acceptor ubiquinone. Contains FMN, which is the initial electron acceptor as well as one iron-sulfur cluster. In Mus musculus (Mouse), this protein is NADH dehydrogenase [ubiquinone] flavoprotein 1, mitochondrial.